The primary structure comprises 364 residues: Protein leg1b (364 aa).

The first 22 residues, 1–22 (MSEMGFLRSVAAVLLLAVFSHA), serve as a signal peptide directing secretion. The N-linked (GlcNAc...) asparagine glycan is linked to Asn70.

Belongs to the LEG1 family. Detected in all tissues tested, with the highest levels in serum (at protein level). At mRNA level, only expressed in liver.

It localises to the secreted. Functionally, involved in early development of liver, exocrine pancreas and intestine, probably through cell cycle regulation. In liver, its function is partially redundant with leg1a function. This is Protein leg1b from Danio rerio (Zebrafish).